The following is a 114-amino-acid chain: Large ribosomal subunit protein bL19 (114 aa).

This sequence belongs to the bacterial ribosomal protein bL19 family.

Its function is as follows. This protein is located at the 30S-50S ribosomal subunit interface and may play a role in the structure and function of the aminoacyl-tRNA binding site. The chain is Large ribosomal subunit protein bL19 from Clostridium botulinum (strain Loch Maree / Type A3).